Reading from the N-terminus, the 953-residue chain is Isoleucine--tRNA ligase (953 aa).

A 'HIGH' region motif is present at residues 61–71 (PYANGALHIGH). L-isoleucyl-5'-AMP is bound at residue Glu564. Residues 605-609 (KMSKS) carry the 'KMSKS' region motif. An ATP-binding site is contributed by Lys608. Zn(2+) contacts are provided by Cys922, Cys925, Cys942, and Cys945.

It belongs to the class-I aminoacyl-tRNA synthetase family. IleS type 1 subfamily. As to quaternary structure, monomer. The cofactor is Zn(2+).

It localises to the cytoplasm. The catalysed reaction is tRNA(Ile) + L-isoleucine + ATP = L-isoleucyl-tRNA(Ile) + AMP + diphosphate. Catalyzes the attachment of isoleucine to tRNA(Ile). As IleRS can inadvertently accommodate and process structurally similar amino acids such as valine, to avoid such errors it has two additional distinct tRNA(Ile)-dependent editing activities. One activity is designated as 'pretransfer' editing and involves the hydrolysis of activated Val-AMP. The other activity is designated 'posttransfer' editing and involves deacylation of mischarged Val-tRNA(Ile). The protein is Isoleucine--tRNA ligase of Thermosynechococcus vestitus (strain NIES-2133 / IAM M-273 / BP-1).